We begin with the raw amino-acid sequence, 434 residues long: Gamma-enolase (434 aa).

N-acetylserine is present on S2. K5 is subject to N6-acetyllysine. At T26 the chain carries Phosphothreonine. Position 40 (S40) interacts with Mg(2+). Phosphotyrosine is present on Y44. K60 is subject to N6-acetyllysine; alternate. K60 carries the post-translational modification N6-succinyllysine; alternate. K64 bears the N6-acetyllysine mark. K89 is subject to N6-acetyllysine; alternate. K89 carries the post-translational modification N6-succinyllysine; alternate. Residues H158 and E167 each coordinate substrate. N6-acetyllysine occurs at positions 193, 197, and 199. The residue at position 202 (K202) is an N6-acetyllysine; alternate. A Glycyl lysine isopeptide (Lys-Gly) (interchain with G-Cter in SUMO2); alternate cross-link involves residue K202. E210 serves as the catalytic Proton donor. N6-acetyllysine; alternate occurs at positions 228 and 233. At K228 the chain carries N6-succinyllysine; alternate. The residue at position 233 (K233) is an N6-(2-hydroxyisobutyryl)lysine; alternate. D245 contacts Mg(2+). Residue K256 is modified to N6-acetyllysine. S263 bears the Phosphoserine mark. Y287 carries the phosphotyrosine modification. S291 is modified (phosphoserine). The Mg(2+) site is built by E293 and D318. E293 and D318 together coordinate substrate. K335 and K343 each carry N6-acetyllysine. The Proton acceptor role is filled by K343. Substrate contacts are provided by residues 370-373 (SHRS) and K394. K406 is subject to N6-acetyllysine.

The protein belongs to the enolase family. In terms of assembly, mammalian enolase is composed of 3 isozyme subunits, alpha, beta and gamma, which can form homodimers or heterodimers which are cell-type and development-specific. Requires Mg(2+) as cofactor. In terms of tissue distribution, skeletal muscle (at protein level). The alpha/alpha homodimer is expressed in embryo and in most adult tissues. The alpha/beta heterodimer and the beta/beta homodimer are found in striated muscle, and the alpha/gamma heterodimer and the gamma/gamma homodimer in neurons.

It localises to the cytoplasm. It is found in the cell membrane. It catalyses the reaction (2R)-2-phosphoglycerate = phosphoenolpyruvate + H2O. Its pathway is carbohydrate degradation; glycolysis; pyruvate from D-glyceraldehyde 3-phosphate: step 4/5. Has neurotrophic and neuroprotective properties on a broad spectrum of central nervous system (CNS) neurons. Binds, in a calcium-dependent manner, to cultured neocortical neurons and promotes cell survival. This is Gamma-enolase (Eno2) from Mus musculus (Mouse).